Reading from the N-terminus, the 305-residue chain is Tetraspanin-12 (305 aa).

Residues 1–12 (MAREDSVKCLRC) are Cytoplasmic-facing. Residues cysteine 9 and cysteine 12 are each lipidated (S-palmitoyl cysteine). The chain crosses the membrane as a helical span at residues 13–33 (LLYALNLLFWLMSISVLAVSA). Residues 34–59 (WMRDYLNNVLTLTAETRVEEAVILTY) are Extracellular-facing. The chain crosses the membrane as a helical span at residues 60–80 (FPVVHPVMIAVCCFLIIVGML). Residues 81-89 (GYCGTVKRN) are Cytoplasmic-facing. The S-palmitoyl cysteine moiety is linked to residue cysteine 83. A helical transmembrane segment spans residues 90–110 (LLLLAWYFGSLLVIFCVELAC). At 111-224 (GVWTYEQELM…RGTKQLQVLR (114 aa)) the chain is on the extracellular side. Residues 225–245 (FLGISIGVTQILAMILTITLL) traverse the membrane as a helical segment. Topologically, residues 246–305 (WALYYDRREPGTDQMMSLKNDNSQHLSCPSVELLKPSLSRIFEHTSMANSFNTHFEMEEL) are cytoplasmic.

The protein belongs to the tetraspanin (TM4SF) family. In terms of assembly, component of a complex, at least composed of TSPAN12, FZD4 and norrin (NDP). Interacts (when palmitoylated) with ADAM10. Interacts with MMP14/MT1-MMP. In terms of processing, palmitoylated; required for interaction with ADAM10. The precise position of palmitoylated residues is unclear and occurs either on Cys-9, Cys-12 and/or Cys-83.

The protein localises to the cell membrane. Functionally, regulator of cell surface receptor signal transduction. Plays a central role in retinal vascularization by regulating norrin (NDP) signal transduction. Acts in concert with norrin (NDP) to promote FZD4 multimerization and subsequent activation of FZD4, leading to promote accumulation of beta-catenin (CTNNB1) and stimulate LEF/TCF-mediated transcriptional programs. Suprisingly, it only activates the norrin (NDP)-dependent activation of FZD4, while it does not activate the Wnt-dependent activation of FZD4, suggesting the existence of a Wnt-independent signaling that also promote accumulation the beta-catenin (CTNNB1). Acts as a regulator of membrane proteinases such as ADAM10 and MMP14/MT1-MMP. Activates ADAM10-dependent cleavage activity of amyloid precursor protein (APP). Activates MMP14/MT1-MMP-dependent cleavage activity. In Homo sapiens (Human), this protein is Tetraspanin-12 (TSPAN12).